Consider the following 186-residue polypeptide: Holliday junction branch migration complex subunit RuvA (186 aa).

The domain I stretch occupies residues 1–61 (MYSYIKGKVV…ENLQILYGFN (61 aa)). The interval 62-134 (DNKNLLFFKK…LKGDLIFSEK (73 aa)) is domain II. A flexible linker region spans residues 134–135 (KI). A domain III region spans residues 136–186 (ILNPKKTELEKILLNLGFVKKEIKSVLNQIDDKKELELMLKEVLLKLAKNI).

It belongs to the RuvA family. Homotetramer. Forms an RuvA(8)-RuvB(12)-Holliday junction (HJ) complex. HJ DNA is sandwiched between 2 RuvA tetramers; dsDNA enters through RuvA and exits via RuvB. An RuvB hexamer assembles on each DNA strand where it exits the tetramer. Each RuvB hexamer is contacted by two RuvA subunits (via domain III) on 2 adjacent RuvB subunits; this complex drives branch migration. In the full resolvosome a probable DNA-RuvA(4)-RuvB(12)-RuvC(2) complex forms which resolves the HJ.

It localises to the cytoplasm. The RuvA-RuvB-RuvC complex processes Holliday junction (HJ) DNA during genetic recombination and DNA repair, while the RuvA-RuvB complex plays an important role in the rescue of blocked DNA replication forks via replication fork reversal (RFR). RuvA specifically binds to HJ cruciform DNA, conferring on it an open structure. The RuvB hexamer acts as an ATP-dependent pump, pulling dsDNA into and through the RuvAB complex. HJ branch migration allows RuvC to scan DNA until it finds its consensus sequence, where it cleaves and resolves the cruciform DNA. This chain is Holliday junction branch migration complex subunit RuvA, found in Phytoplasma mali (strain AT).